The sequence spans 83 residues: ATP synthase subunit c (83 aa).

A run of 2 helical transmembrane segments spans residues 9 to 29 (LICV…GIGI) and 51 to 71 (MVFM…GLVI).

It belongs to the ATPase C chain family. As to quaternary structure, F-type ATPases have 2 components, F(1) - the catalytic core - and F(0) - the membrane proton channel. F(1) has five subunits: alpha(3), beta(3), gamma(1), delta(1), epsilon(1). F(0) has three main subunits: a(1), b(2) and c(10-14). The alpha and beta chains form an alternating ring which encloses part of the gamma chain. F(1) is attached to F(0) by a central stalk formed by the gamma and epsilon chains, while a peripheral stalk is formed by the delta and b chains.

Its subcellular location is the cell inner membrane. Its function is as follows. F(1)F(0) ATP synthase produces ATP from ADP in the presence of a proton or sodium gradient. F-type ATPases consist of two structural domains, F(1) containing the extramembraneous catalytic core and F(0) containing the membrane proton channel, linked together by a central stalk and a peripheral stalk. During catalysis, ATP synthesis in the catalytic domain of F(1) is coupled via a rotary mechanism of the central stalk subunits to proton translocation. Functionally, key component of the F(0) channel; it plays a direct role in translocation across the membrane. A homomeric c-ring of between 10-14 subunits forms the central stalk rotor element with the F(1) delta and epsilon subunits. The sequence is that of ATP synthase subunit c from Desulfotalea psychrophila (strain LSv54 / DSM 12343).